The sequence spans 368 residues: DNA replication and repair protein RecF (368 aa).

An ATP-binding site is contributed by 30 to 37 (GNNAQGKT).

It belongs to the RecF family.

The protein resides in the cytoplasm. The RecF protein is involved in DNA metabolism; it is required for DNA replication and normal SOS inducibility. RecF binds preferentially to single-stranded, linear DNA. It also seems to bind ATP. In Streptococcus pyogenes serotype M6 (strain ATCC BAA-946 / MGAS10394), this protein is DNA replication and repair protein RecF.